The following is a 259-amino-acid chain: uncharacterized protein (259 aa).

The segment at residues 1-19 is a signal peptide (or 26); sequence MKLSVKIAGVLTVAAAAMT. An ATP-binding site is contributed by 214–221; the sequence is GPYELGKT.

This is an uncharacterized protein from Bacillus subtilis (strain 168).